Here is a 62-residue protein sequence, read N- to C-terminus: Alpha-toxin Tf4 (62 aa).

An LCN-type CS-alpha/beta domain is found at 2-62 (KEGYPADSKG…SVWDSATNKC (61 aa)). 4 disulfide bridges follow: Cys12-Cys62, Cys16-Cys38, Cys24-Cys43, and Cys28-Cys45. Position 62 is a cysteine amide (Cys62).

As to expression, expressed by the venom gland.

It localises to the secreted. In terms of biological role, alpha toxins bind voltage-independently at site-3 of sodium channels (Nav) and inhibit the inactivation of the activated channels, thereby blocking neuronal transmission. This toxin is toxic to frogs but non-toxic to insect larvae (T.molitor), mammals (rats) and crustaceans (crabs) at the doses assayed. The protein is Alpha-toxin Tf4 of Tityus fasciolatus (Central Brazilian scorpion).